Here is a 765-residue protein sequence, read N- to C-terminus: Transcription factor SKN7 (765 aa).

The segment at 1–42 (MPPTNGEGGSQQPQQQQQQQQQQQQQQQQQQQQQQGGSGSSD) is disordered. Residues 11–35 (QQPQQQQQQQQQQQQQQQQQQQQQQ) show a composition bias toward low complexity. The tract at residues 40-145 (SSDFVRKLYK…NLDNIRRKAP (106 aa)) is DNA-binding domain. Residues 157 to 198 (FNASQQQIAALSESLQATQQQLQALQQQCYELEKTNRLLVSE) adopt a coiled-coil conformation. Residues 160 to 220 (SQQQIAALSE…QASNEIINHL (61 aa)) form a hydrophobic repeat HR-A/B region. The disordered stretch occupies residues 371-391 (SSSQITPSQITPPPKDQMSSM). Positions 398–514 (RVLLVEDDKT…NMSRLLRRHL (117 aa)) constitute a Response regulatory domain. 4-aspartylphosphate is present on Asp-449. The transactivation domain stretch occupies residues 542 to 765 (TAGPATTGVG…PGVGVAGFVQ (224 aa)). The segment covering 550 to 564 (VGVGVAGAPSGGAHG) has biased composition (gly residues). 2 disordered regions span residues 550 to 647 (VGVG…PAGL) and 686 to 765 (PGAM…GFVQ). The segment covering 569 to 584 (AQHQQGYAMAPPTTMQ) has biased composition (low complexity). Over residues 626 to 636 (QPPPPPTPTQP) the composition is skewed to pro residues. Low complexity-rich tracts occupy residues 637–647 (SPTSAAPPAGL) and 699–715 (GVGH…AGAR). A compositionally biased stretch (gly residues) spans 755–765 (HPGVGVAGFVQ).

This sequence belongs to the SKN7 family. Homotrimer.

It is found in the nucleus. Functionally, transcription factor that is part of a SLN1-YPD1-SKN7 two-component regulatory system, which controls gene expression in response to changes in the osmolarity of the extracellular environment. Under low osmotic conditions, phosphorylated and activated by the phosphorelay intermediate protein YPD1. Also activated in response to oxidative stress, independent on the two-component regulatory system. Regulates heat shock genes in response to oxidative stress and genes involved in cell wall integrity in response to osmotic changes. This Chaetomium thermophilum (strain DSM 1495 / CBS 144.50 / IMI 039719) (Thermochaetoides thermophila) protein is Transcription factor SKN7.